The primary structure comprises 189 residues: Ras-like protein 1 (189 aa).

10–17 (GAGGVGKS) lines the GTP pocket. The short motif at 32–40 (YDPTIEDSY) is the Effector region element. Residues 57-61 (DTAGQ) and 116-119 (NKCD) contribute to the GTP site. Cys186 carries the cysteine methyl ester modification. Residue Cys186 is the site of S-geranylgeranyl cysteine attachment. A propeptide spans 187 to 189 (KML) (removed in mature form).

The protein belongs to the small GTPase superfamily. Ras family.

The protein localises to the cell membrane. It carries out the reaction GTP + H2O = GDP + phosphate + H(+). Alternates between an inactive form bound to GDP and an active form bound to GTP. Activated by a guanine nucleotide-exchange factor (GEF) and inactivated by a GTPase-activating protein (GAP). Functionally, ras proteins bind GDP/GTP and possess intrinsic GTPase activity. Plays a role in eye development by regulating cell growth, survival of postmitotic ommatidial cells and differentiation of photoreceptor cells. During larval development, mediates Ptth/tor signaling leading to the production of ecdysone, a hormone required for the initiation of metamorphosis. This Drosophila virilis (Fruit fly) protein is Ras-like protein 1.